The sequence spans 119 residues: Large ribosomal subunit protein bL20 (119 aa).

It belongs to the bacterial ribosomal protein bL20 family.

Functionally, binds directly to 23S ribosomal RNA and is necessary for the in vitro assembly process of the 50S ribosomal subunit. It is not involved in the protein synthesizing functions of that subunit. This is Large ribosomal subunit protein bL20 from Heliobacterium modesticaldum (strain ATCC 51547 / Ice1).